The following is a 344-amino-acid chain: Heat-inducible transcription repressor HrcA (344 aa).

Belongs to the HrcA family.

In terms of biological role, negative regulator of class I heat shock genes (grpE-dnaK-dnaJ and groELS operons). Prevents heat-shock induction of these operons. The sequence is that of Heat-inducible transcription repressor HrcA from Streptococcus mutans serotype c (strain ATCC 700610 / UA159).